Reading from the N-terminus, the 207-residue chain is Charged multivesicular body protein 3 (207 aa).

Residues 174–207 (QVSSAPLETHQQEEVVQEKQEDSELLDRLKALKS) form a disordered region. A coiled-coil region spans residues 183–207 (HQQEEVVQEKQEDSELLDRLKALKS). The segment covering 183 to 207 (HQQEEVVQEKQEDSELLDRLKALKS) has biased composition (basic and acidic residues).

Belongs to the SNF7 family. Probable core component of the endosomal sorting required for transport complex III (ESCRT-III).

It is found in the endosome membrane. Probable core component of the endosomal sorting required for transport complex III (ESCRT-III) which is involved in multivesicular bodies (MVBs) formation and sorting of endosomal cargo proteins into MVBs. MVBs contain intraluminal vesicles (ILVs) that are generated by invagination and scission from the limiting membrane of the endosome and are delivered to lysosomes enabling degradation of membrane proteins. This chain is Charged multivesicular body protein 3 (chmp3), found in Dictyostelium discoideum (Social amoeba).